A 382-amino-acid chain; its full sequence is Lipid-A-disaccharide synthase (382 aa).

The protein belongs to the LpxB family.

The catalysed reaction is 2-N,3-O-bis[(3R)-3-hydroxytetradecanoyl]-alpha-D-glucosaminyl 1-phosphate + UDP-2-N,3-O-bis[(3R)-3-hydroxytetradecanoyl]-alpha-D-glucosamine = lipid A disaccharide (E. coli) + UDP + H(+). The enzyme catalyses a lipid X + a UDP-2-N,3-O-bis[(3R)-3-hydroxyacyl]-alpha-D-glucosamine = a lipid A disaccharide + UDP + H(+). It functions in the pathway glycolipid biosynthesis; lipid IV(A) biosynthesis; lipid IV(A) from (3R)-3-hydroxytetradecanoyl-[acyl-carrier-protein] and UDP-N-acetyl-alpha-D-glucosamine: step 5/6. Condensation of UDP-2,3-diacylglucosamine and 2,3-diacylglucosamine-1-phosphate to form lipid A disaccharide, a precursor of lipid A, a phosphorylated glycolipid that anchors the lipopolysaccharide to the outer membrane of the cell. This chain is Lipid-A-disaccharide synthase, found in Shigella boydii serotype 18 (strain CDC 3083-94 / BS512).